A 319-amino-acid polypeptide reads, in one-letter code: Transcription factor bHLH111 (319 aa).

Residues 1–23 (MDHHHHIASRNSSTTSELPSFEP) are disordered. Residues 9-18 (SRNSSTTSEL) show a composition bias toward polar residues. Residues 195–244 (SEGSTLSPEKELPKAKLRDKITTLQQIVSPFGKTDTASVLQEAITYINFY) form the bHLH domain.

As to quaternary structure, homodimer.

The protein localises to the nucleus. The sequence is that of Transcription factor bHLH111 (BHLH111) from Arabidopsis thaliana (Mouse-ear cress).